We begin with the raw amino-acid sequence, 490 residues long: Cytochrome P450 2C2 (490 aa).

Position 435 (C435) interacts with heme.

It belongs to the cytochrome P450 family. The cofactor is heme.

Its subcellular location is the endoplasmic reticulum membrane. The protein resides in the microsome membrane. It carries out the reaction an organic molecule + reduced [NADPH--hemoprotein reductase] + O2 = an alcohol + oxidized [NADPH--hemoprotein reductase] + H2O + H(+). Functionally, cytochromes P450 are a group of heme-thiolate monooxygenases. In liver microsomes, this enzyme is involved in an NADPH-dependent electron transport pathway. It oxidizes a variety of structurally unrelated compounds, including steroids, fatty acids, and xenobiotics. In the epoxidation of arachidonic acid it generates only 14,15- and 11,12-cis-epoxyeicosatrienoic acids. The chain is Cytochrome P450 2C2 (CYP2C2) from Oryctolagus cuniculus (Rabbit).